An 839-amino-acid polypeptide reads, in one-letter code: DNA-directed RNA polymerase YonO (839 aa).

Aspartate 535, aspartate 537, and aspartate 539 together coordinate Mg(2+).

Belongs to the YRH RNA polymerase family. A divalent metal cation is required as a cofactor.

The enzyme catalyses RNA(n) + a ribonucleoside 5'-triphosphate = RNA(n+1) + diphosphate. Functionally, a single subunit DNA-dependent RNA polymerase (RNAP) that catalyzes the transcription of DNA into RNA using the four ribonucleoside triphosphates (rNTPs) as substrates. The enzyme is more highly processive than the multisubunit RNAP from E.coli but is considerably more error-prone. It has no detectable proof-reading function but can perform pyrophosphorolysis. Probably transcribes the late genes of the SPbeta phage starting from yonK. The polypeptide is DNA-directed RNA polymerase YonO (yonO) (Bacillus pumilus (Bacillus mesentericus)).